Consider the following 382-residue polypeptide: Chaperone protein DnaJ (382 aa).

The J domain maps to 5–70 (DFYEILGVPK…QKRAAYDQYG (66 aa)). The CR-type zinc-finger motif lies at 137–215 (GVTKEIRIPT…CHGHGRVEKT (79 aa)). Positions 150, 153, 167, 170, 189, 192, 203, and 206 each coordinate Zn(2+). 4 CXXCXGXG motif repeats span residues 150–157 (CDICHGSG), 167–174 (CPTCHGSG), 189–196 (CPHCHGRG), and 203–210 (CNKCHGHG).

The protein belongs to the DnaJ family. In terms of assembly, homodimer. It depends on Zn(2+) as a cofactor.

It is found in the cytoplasm. Its function is as follows. Participates actively in the response to hyperosmotic and heat shock by preventing the aggregation of stress-denatured proteins and by disaggregating proteins, also in an autonomous, DnaK-independent fashion. Unfolded proteins bind initially to DnaJ; upon interaction with the DnaJ-bound protein, DnaK hydrolyzes its bound ATP, resulting in the formation of a stable complex. GrpE releases ADP from DnaK; ATP binding to DnaK triggers the release of the substrate protein, thus completing the reaction cycle. Several rounds of ATP-dependent interactions between DnaJ, DnaK and GrpE are required for fully efficient folding. Also involved, together with DnaK and GrpE, in the DNA replication of plasmids through activation of initiation proteins. This is Chaperone protein DnaJ from Enterobacter sp. (strain 638).